The sequence spans 595 residues: UvrABC system protein C (595 aa).

The region spanning 17–94 (FEPGCYLMKD…IKQYQPRYNI (78 aa)) is the GIY-YIG domain. One can recognise a UVR domain in the interval 199–234 (KTIIKNLESRMQAASENLEFEQAKEYRDLIQNIHNL).

The protein belongs to the UvrC family. Interacts with UvrB in an incision complex.

The protein localises to the cytoplasm. Functionally, the UvrABC repair system catalyzes the recognition and processing of DNA lesions. UvrC both incises the 5' and 3' sides of the lesion. The N-terminal half is responsible for the 3' incision and the C-terminal half is responsible for the 5' incision. The protein is UvrABC system protein C of Staphylococcus carnosus (strain TM300).